Consider the following 285-residue polypeptide: Secreted RxLR effector protein 106 (285 aa).

The signal sequence occupies residues 1-24 (MSVRYAGLLLAAVAVSAHINEVNS). The RxLR-dEER signature appears at 42–54 (RDLRSADNGNEER). Residues Asn-182 and Asn-187 are each glycosylated (N-linked (GlcNAc...) asparagine). Positions 220–229 (IEGDKEKKGG) are enriched in basic and acidic residues. The segment at 220-262 (IEGDKEKKGGPDYVEGTESRGKKRGQTEAPDLEPGLTPKQKRL) is disordered. The Bipartite nuclear localization signal signature appears at 239 to 264 (RGKKRGQTEAPDLEPGLTPKQKRLKR).

This sequence belongs to the RxLR effector family. In terms of assembly, interacts with host RCD1 and SRO1 transcription co-regulators.

It is found in the secreted. The protein resides in the host nucleus. Functionally, secreted effector that suppresses pathogen-associated molecular pattern (PAMP)-triggered immunity (PTI) in host plants. Binds to RCD1 and SRO1 transcription co-regulators to attenuate transcriptional activation of salicylic acid (SA)-induced defense genes and alters plant growth responses to light. Suppresses SA signal transduction but not SA levels. This is Secreted RxLR effector protein 106 from Hyaloperonospora arabidopsidis (strain Emoy2) (Downy mildew agent).